Here is a 181-residue protein sequence, read N- to C-terminus: U1 small nuclear ribonucleoprotein C (181 aa).

The segment at 2–34 (PKCDYCDVYLTHDSMSVRKAHNSGRNHLRNVVD) adopts a Matrin-type zinc-finger fold. Composition is skewed to pro residues over residues 129–143 (PGMPAGMPFPPPGGL) and 150–174 (PIPPPGGFPGMPPPGQGFPGMPPPG). A disordered region spans residues 129 to 181 (PGMPAGMPFPPPGGLPPNFQFPIPPPGGFPGMPPPGQGFPGMPPPGGNHDERR).

This sequence belongs to the U1 small nuclear ribonucleoprotein C family. As to quaternary structure, U1 snRNP is composed of the 7 core Sm proteins B/B', D1, D2, D3, E, F and G that assemble in a heptameric protein ring on the Sm site of the small nuclear RNA to form the core snRNP, and at least 3 U1 snRNP-specific proteins U1-70K, U1-A and U1-C. U1-C interacts with U1 snRNA and the 5' splice-site region of the pre-mRNA.

The protein resides in the nucleus. In terms of biological role, component of the spliceosomal U1 snRNP, which is essential for recognition of the pre-mRNA 5' splice-site and the subsequent assembly of the spliceosome. U1-C is directly involved in initial 5' splice-site recognition for both constitutive and regulated alternative splicing. The interaction with the 5' splice-site seems to precede base-pairing between the pre-mRNA and the U1 snRNA. Stimulates commitment or early (E) complex formation by stabilizing the base pairing of the 5' end of the U1 snRNA and the 5' splice-site region. This chain is U1 small nuclear ribonucleoprotein C, found in Sclerotinia sclerotiorum (strain ATCC 18683 / 1980 / Ss-1) (White mold).